We begin with the raw amino-acid sequence, 211 residues long: Small ribosomal subunit protein eS8 (211 aa).

It belongs to the eukaryotic ribosomal protein eS8 family.

The sequence is that of Small ribosomal subunit protein eS8 (rps8) from Dictyostelium discoideum (Social amoeba).